Here is a 660-residue protein sequence, read N- to C-terminus: DNA ligase (660 aa).

NAD(+)-binding positions include aspartate 33 to aspartate 37, serine 82 to leucine 83, and glutamate 110. Lysine 112 serves as the catalytic N6-AMP-lysine intermediate. NAD(+)-binding residues include arginine 133, glutamate 167, lysine 281, and lysine 305. Cysteine 396, cysteine 399, cysteine 412, and cysteine 417 together coordinate Zn(2+). A BRCT domain is found at glycine 583 to aspartate 660.

The protein belongs to the NAD-dependent DNA ligase family. LigA subfamily. Requires Mg(2+) as cofactor. The cofactor is Mn(2+).

It carries out the reaction NAD(+) + (deoxyribonucleotide)n-3'-hydroxyl + 5'-phospho-(deoxyribonucleotide)m = (deoxyribonucleotide)n+m + AMP + beta-nicotinamide D-nucleotide.. In terms of biological role, DNA ligase that catalyzes the formation of phosphodiester linkages between 5'-phosphoryl and 3'-hydroxyl groups in double-stranded DNA using NAD as a coenzyme and as the energy source for the reaction. It is essential for DNA replication and repair of damaged DNA. The sequence is that of DNA ligase from Borreliella burgdorferi (strain ZS7) (Borrelia burgdorferi).